We begin with the raw amino-acid sequence, 462 residues long: Asparagine--tRNA ligase (462 aa).

This sequence belongs to the class-II aminoacyl-tRNA synthetase family. Homodimer.

The protein localises to the cytoplasm. The catalysed reaction is tRNA(Asn) + L-asparagine + ATP = L-asparaginyl-tRNA(Asn) + AMP + diphosphate + H(+). The protein is Asparagine--tRNA ligase of Synechocystis sp. (strain ATCC 27184 / PCC 6803 / Kazusa).